We begin with the raw amino-acid sequence, 610 residues long: Dopamine beta-hydroxylase (610 aa).

Residues methionine 1–arginine 9 lie on the Cytoplasmic side of the membrane. The chain crosses the membrane as a helical; Signal-anchor for type II membrane protein span at residues glutamate 10–leucine 30. Residues glutamine 31–glycine 610 lie on the Intragranular side of the membrane. Positions glycine 50 to leucine 166 constitute a DOMON domain. Asparagine 57, asparagine 177, and asparagine 194 each carry an N-linked (GlcNAc...) asparagine glycan. 6 disulfides stabilise this stretch: cysteine 147-cysteine 589, cysteine 225-cysteine 276, cysteine 262-cysteine 288, cysteine 383-cysteine 496, cysteine 387-cysteine 558, and cysteine 459-cysteine 481. Tyrosine 223 is a catalytic residue. Residues histidine 255 and histidine 256 each coordinate Cu(2+). The Cu(2+) site is built by histidine 326, histidine 405, histidine 407, and methionine 480. Histidine 405 is an active-site residue. The interval threonine 586–glycine 610 is disordered.

This sequence belongs to the copper type II ascorbate-dependent monooxygenase family. In terms of assembly, homotetramer; composed of two disulfide-linked dimers. It depends on Cu(2+) as a cofactor. Post-translationally, proteolytic cleavage after the membrane-anchor leads to the release of the soluble form. N-glycosylated. In terms of tissue distribution, detected in adrenal medulla chromaffin cells.

It is found in the cytoplasmic vesicle. The protein resides in the secretory vesicle lumen. Its subcellular location is the secretory vesicle. The protein localises to the chromaffin granule lumen. It localises to the secreted. It is found in the secretory vesicle membrane. The protein resides in the chromaffin granule membrane. The catalysed reaction is dopamine + 2 L-ascorbate + O2 = (R)-noradrenaline + 2 monodehydro-L-ascorbate radical + H2O. The protein operates within catecholamine biosynthesis; (R)-noradrenaline biosynthesis; (R)-noradrenaline from dopamine: step 1/1. In terms of biological role, catalyzes the hydroxylation of dopamine to noradrenaline (also known as norepinephrine), and is thus vital for regulation of these neurotransmitters. The protein is Dopamine beta-hydroxylase (DBH) of Equus caballus (Horse).